A 146-amino-acid polypeptide reads, in one-letter code: Large ribosomal subunit protein bL17 (146 aa).

Residues 124 to 134 are compositionally biased toward low complexity; it reads EASRATRAAAS. The tract at residues 124-146 is disordered; that stretch reads EASRATRAAASKKAEEEAASEAE.

The protein belongs to the bacterial ribosomal protein bL17 family. In terms of assembly, part of the 50S ribosomal subunit. Contacts protein L32.

The chain is Large ribosomal subunit protein bL17 from Corynebacterium kroppenstedtii (strain DSM 44385 / JCM 11950 / CIP 105744 / CCUG 35717).